Reading from the N-terminus, the 172-residue chain is Shikimate kinase (172 aa).

11–16 is a binding site for ATP; the sequence is GAGKST. S15 lines the Mg(2+) pocket. Residues D33, R57, and G79 each coordinate substrate. R117 serves as a coordination point for ATP. Residue R136 coordinates substrate. Residue R153 participates in ATP binding.

It belongs to the shikimate kinase family. In terms of assembly, monomer. The cofactor is Mg(2+).

It is found in the cytoplasm. The enzyme catalyses shikimate + ATP = 3-phosphoshikimate + ADP + H(+). It participates in metabolic intermediate biosynthesis; chorismate biosynthesis; chorismate from D-erythrose 4-phosphate and phosphoenolpyruvate: step 5/7. Catalyzes the specific phosphorylation of the 3-hydroxyl group of shikimic acid using ATP as a cosubstrate. This Pseudomonas putida (strain ATCC 700007 / DSM 6899 / JCM 31910 / BCRC 17059 / LMG 24140 / F1) protein is Shikimate kinase.